We begin with the raw amino-acid sequence, 325 residues long: Probable 2-ketogluconate reductase (325 aa).

Residues 158–159 (RI), threonine 211, 238–240 (ISR), and aspartate 264 each bind NAD(+). Arginine 240 is an active-site residue. The active site involves glutamate 269. Histidine 288 serves as the catalytic Proton donor. An NAD(+)-binding site is contributed by 288–291 (HIGS).

This sequence belongs to the D-isomer specific 2-hydroxyacid dehydrogenase family.

The enzyme catalyses D-gluconate + NADP(+) = 2-dehydro-D-gluconate + NADPH + H(+). The chain is Probable 2-ketogluconate reductase (yvcT) from Bacillus subtilis (strain 168).